A 291-amino-acid polypeptide reads, in one-letter code: Beta-lactamase CTX-M-8 (291 aa).

The first 30 residues, 1–30, serve as a signal peptide directing secretion; it reads MMRHRVKRMMLMTTACISLLLGSAPLYAQA. The Nucleophile; acyl-ester intermediate role is filled by serine 73. The a beta-lactam site is built by lysine 76, serine 133, glutamate 169, and serine 240.

Belongs to the class-A beta-lactamase family. Monomer.

It localises to the secreted. The enzyme catalyses a beta-lactam + H2O = a substituted beta-amino acid. With respect to regulation, inhibited by the beta-lactamase-blocking agents clavulanic acid, tazobactam and sulbactam; in the DH5alpha strain of E.coli. Its function is as follows. Extended-spectrum beta-lactamase (ESBL) which confers resistance to penicillins, as well as first, third and fourth-generation cephalosporins. Has cefotaxime-hydrolyzing activity. Inactive against cephalosporin antibiotic, cefoxitin, and the carbapenem, imipenem. The chain is Beta-lactamase CTX-M-8 from Citrobacter amalonaticus.